A 787-amino-acid polypeptide reads, in one-letter code: Integrin beta-6 (787 aa).

Positions 1–21 (MGIELLCLFFLFLGRNDHVQG) are cleaved as a signal peptide. The PSI domain occupies 22–71 (GCAMGGAETCEDCLLIGPQCAWCSQENFTHLSGVGERCDTPANLLAKGCQ). The Extracellular portion of the chain corresponds to 22–708 (GCAMGGAETC…KDCPKPPNIP (687 aa)). 19 disulfides stabilise this stretch: cysteine 23-cysteine 41, cysteine 31-cysteine 454, cysteine 34-cysteine 59, cysteine 44-cysteine 70, cysteine 197-cysteine 204, cysteine 252-cysteine 293, cysteine 394-cysteine 406, cysteine 426-cysteine 452, cysteine 456-cysteine 476, cysteine 467-cysteine 479, cysteine 481-cysteine 490, cysteine 492-cysteine 519, cysteine 502-cysteine 517, cysteine 511-cysteine 522, cysteine 524-cysteine 537, cysteine 539-cysteine 560, cysteine 544-cysteine 558, cysteine 552-cysteine 563, and cysteine 565-cysteine 574. Asparagine 48 and asparagine 97 each carry an N-linked (GlcNAc...) asparagine glycan. Residues 131–371 (YPVDLYYLMD…QLIISAYEEL (241 aa)) form the VWFA domain. Aspartate 140, serine 142, and serine 144 together coordinate Mg(2+). Ca(2+) contacts are provided by serine 144, aspartate 147, aspartate 148, and glutamate 179. Positions 235, 237, 239, and 240 each coordinate Ca(2+). Glutamate 240 serves as a coordination point for Mg(2+). Asparagine 260 is a glycosylation site (N-linked (GlcNAc...) asparagine). Ca(2+) contacts are provided by aspartate 271 and lysine 355. Residue asparagine 387 is glycosylated (N-linked (GlcNAc...) asparagine). Asparagine 418 carries N-linked (GlcNAc...) asparagine glycosylation. 4 I-EGF domains span residues 456 to 491 (CQKE…HHCE), 492 to 538 (CGED…PYCQ), 539 to 575 (CDNF…EYCN), and 576 to 615 (CTTS…PACE). 2 N-linked (GlcNAc...) asparagine glycosylation sites follow: asparagine 463 and asparagine 471. Asparagine 541 carries an N-linked (GlcNAc...) asparagine glycan. Asparagine 575 carries N-linked (GlcNAc...) asparagine glycosylation. Cystine bridges form between cysteine 576–cysteine 599, cysteine 583–cysteine 597, cysteine 591–cysteine 602, cysteine 604–cysteine 614, cysteine 617–cysteine 620, cysteine 624–cysteine 670, cysteine 630–cysteine 649, cysteine 633–cysteine 645, and cysteine 678–cysteine 701. A helical transmembrane segment spans residues 709–729 (MIMLGVSLAILLIGVALLCIW). The interaction with HAX1 stretch occupies residues 730-757 (KLLVSFHDRKEVAKFEAERSKAKWQTGT). Topologically, residues 730–787 (KLLVSFHDRKEVAKFEAERSKAKWQTGTNPLYRGSTSTFKNVTYKHKEKQKVDLSTDG) are cytoplasmic.

It belongs to the integrin beta chain family. Heterodimer of an alpha and a beta subunit. Interacts with FLNB. Interacts with HAX1. ITGAV:ITGB6 interacts with FBN1. ITGAV:ITGB6 interacts with TGFB1.

It is found in the cell membrane. It localises to the cell junction. The protein resides in the focal adhesion. Integrin alpha-V:beta-6 (ITGAV:ITGB6) is a receptor for fibronectin and cytotactin. It recognizes the sequence R-G-D in its ligands. ITGAV:ITGB6 acts as a receptor for fibrillin-1 (FBN1) and mediates R-G-D-dependent cell adhesion to FBN1. Integrin alpha-V:beta-6 (ITGAV:ITGB6) mediates R-G-D-dependent release of transforming growth factor beta-1 (TGF-beta-1) from regulatory Latency-associated peptide (LAP), thereby playing a key role in TGF-beta-1 activation. The chain is Integrin beta-6 (ITGB6) from Ovis aries (Sheep).